The primary structure comprises 222 residues: Small ribosomal subunit protein uS7m (222 aa).

Residues 1–14 (MTTKLARFAQKRWI) constitute a mitochondrion transit peptide.

It belongs to the universal ribosomal protein uS7 family. Component of the mitochondrial ribosome small subunit (28S) which comprises a 12S rRNA and about 30 distinct proteins.

Its subcellular location is the mitochondrion. This is Small ribosomal subunit protein uS7m (mrps-7) from Caenorhabditis elegans.